A 403-amino-acid polypeptide reads, in one-letter code: Metacaspase-7 (403 aa).

Residues histidine 86 and cysteine 139 contribute to the active site. At cysteine 139 the chain carries S-nitrosocysteine.

This sequence belongs to the peptidase C14B family. Post-translationally, proteolytically processed; by an autocatalytic mechanism. Expressed in roots, flowers and siliques.

This Arabidopsis thaliana (Mouse-ear cress) protein is Metacaspase-7 (AMC7).